Here is a 969-residue protein sequence, read N- to C-terminus: RNA polymerase-associated protein RapA (969 aa).

A Helicase ATP-binding domain is found at 164–334; sequence EVGRRHAPRV…FARLRLLDAD (171 aa). An ATP-binding site is contributed by 177–184; that stretch reads DEVGLGKT. Positions 280 to 283 match the DEAH box motif; that stretch reads DEAH. Residues 492–646 enclose the Helicase C-terminal domain; that stretch reads RVNWLLEKVK…TCPTGRAVYD (155 aa).

Belongs to the SNF2/RAD54 helicase family. RapA subfamily. In terms of assembly, interacts with the RNAP. Has a higher affinity for the core RNAP than for the holoenzyme. Its ATPase activity is stimulated by binding to RNAP.

Its function is as follows. Transcription regulator that activates transcription by stimulating RNA polymerase (RNAP) recycling in case of stress conditions such as supercoiled DNA or high salt concentrations. Probably acts by releasing the RNAP, when it is trapped or immobilized on tightly supercoiled DNA. Does not activate transcription on linear DNA. Probably not involved in DNA repair. This Vibrio cholerae serotype O1 (strain ATCC 39315 / El Tor Inaba N16961) protein is RNA polymerase-associated protein RapA.